Consider the following 230-residue polypeptide: Flagellar L-ring protein (230 aa).

A signal peptide spans 1–21 (MMLKTVLRLPVCAALLALAAG). Cysteine 22 carries N-palmitoyl cysteine lipidation. The S-diacylglycerol cysteine moiety is linked to residue cysteine 22. Positions 34-53 (PLTAPPPPPPQPSARPNGSI) are disordered. The segment covering 36–46 (TAPPPPPPQPS) has biased composition (pro residues).

Belongs to the FlgH family. The basal body constitutes a major portion of the flagellar organelle and consists of four rings (L,P,S, and M) mounted on a central rod.

It localises to the cell outer membrane. The protein localises to the bacterial flagellum basal body. Assembles around the rod to form the L-ring and probably protects the motor/basal body from shearing forces during rotation. The polypeptide is Flagellar L-ring protein (Bordetella parapertussis (strain 12822 / ATCC BAA-587 / NCTC 13253)).